A 139-amino-acid polypeptide reads, in one-letter code: Aspartate 1-decarboxylase (139 aa).

Catalysis depends on Ser-25, which acts as the Schiff-base intermediate with substrate; via pyruvic acid. Ser-25 carries the pyruvic acid (Ser) modification. Thr-57 serves as a coordination point for substrate. Residue Tyr-58 is the Proton donor of the active site. 73-75 (GAA) contacts substrate. The interval 116–139 (ELGSDPAHAPEGSGLTSPRSLTFA) is disordered. Positions 129 to 139 (GLTSPRSLTFA) are enriched in polar residues.

It belongs to the PanD family. As to quaternary structure, heterooctamer of four alpha and four beta subunits. Pyruvate serves as cofactor. Is synthesized initially as an inactive proenzyme, which is activated by self-cleavage at a specific serine bond to produce a beta-subunit with a hydroxyl group at its C-terminus and an alpha-subunit with a pyruvoyl group at its N-terminus.

The protein resides in the cytoplasm. It catalyses the reaction L-aspartate + H(+) = beta-alanine + CO2. It functions in the pathway cofactor biosynthesis; (R)-pantothenate biosynthesis; beta-alanine from L-aspartate: step 1/1. Its function is as follows. Catalyzes the pyruvoyl-dependent decarboxylation of aspartate to produce beta-alanine. The polypeptide is Aspartate 1-decarboxylase (Nocardia farcinica (strain IFM 10152)).